The sequence spans 340 residues: Mitochondrial glycine transporter (340 aa).

Solcar repeat units lie at residues 23–108, 128–218, and 237–325; these read PKTL…ARNG, LSPF…FKND, and RSTI…LIKS. The next 6 helical transmembrane spans lie at 29–54, 83–109, 134–159, 193–216, 241–267, and 300–318; these read LISGASAGLISAISLQPFDLLKTRLQ, GALPSTLRTSVGAGLYFTILSSARNGI, LATGFIVRAVVGIITMPITIVKTRYE, GSFATLARDCPYAGMYVLFYELFK, INTSAAILAASVSTTITAPFDAIKTRL, and GLSLRFGRKGLSSGISWCI.

Belongs to the mitochondrial carrier (TC 2.A.29) family. SLC25A38 subfamily.

The protein localises to the mitochondrion inner membrane. It carries out the reaction glycine(in) = glycine(out). Its function is as follows. Mitochondrial glycine transporter that imports glycine into the mitochondrial matrix. Plays an important role in providing glycine for the first enzymatic step in heme biosynthesis, the condensation of glycine with succinyl-CoA to produce 5-aminolevulinate (ALA) in the mitochondrial matrix. In Debaryomyces hansenii (strain ATCC 36239 / CBS 767 / BCRC 21394 / JCM 1990 / NBRC 0083 / IGC 2968) (Yeast), this protein is Mitochondrial glycine transporter.